Reading from the N-terminus, the 255-residue chain is Type III pantothenate kinase (255 aa).

6 to 13 (DVGNTNTV) contacts ATP. 108–111 (GADR) is a binding site for substrate. D110 (proton acceptor) is an active-site residue. A K(+)-binding site is contributed by D130. T133 provides a ligand contact to ATP. T185 is a substrate binding site.

The protein belongs to the type III pantothenate kinase family. Homodimer. Requires NH4(+) as cofactor. K(+) is required as a cofactor.

It localises to the cytoplasm. The enzyme catalyses (R)-pantothenate + ATP = (R)-4'-phosphopantothenate + ADP + H(+). The protein operates within cofactor biosynthesis; coenzyme A biosynthesis; CoA from (R)-pantothenate: step 1/5. Functionally, catalyzes the phosphorylation of pantothenate (Pan), the first step in CoA biosynthesis. This is Type III pantothenate kinase from Hyphomonas neptunium (strain ATCC 15444).